The primary structure comprises 275 residues: Hydroxyethylthiazole kinase (275 aa).

Met57 contacts substrate. Residues Arg132 and Ser178 each contribute to the ATP site. Residue Gly205 coordinates substrate.

It belongs to the Thz kinase family. Requires Mg(2+) as cofactor.

It carries out the reaction 5-(2-hydroxyethyl)-4-methylthiazole + ATP = 4-methyl-5-(2-phosphooxyethyl)-thiazole + ADP + H(+). It functions in the pathway cofactor biosynthesis; thiamine diphosphate biosynthesis; 4-methyl-5-(2-phosphoethyl)-thiazole from 5-(2-hydroxyethyl)-4-methylthiazole: step 1/1. Functionally, catalyzes the phosphorylation of the hydroxyl group of 4-methyl-5-beta-hydroxyethylthiazole (THZ). The sequence is that of Hydroxyethylthiazole kinase from Clavibacter sepedonicus (Clavibacter michiganensis subsp. sepedonicus).